Reading from the N-terminus, the 292-residue chain is Ornithine decarboxylase antizyme (292 aa).

The protein belongs to the ODC antizyme family. In terms of assembly, interacts with ODC/SPE1 and thereby sterically blocks ODC homodimerization.

Functionally, ornithine decarboxylase (ODC) antizyme protein that negatively regulates ODC activity and intracellular polyamine biosynthesis in response to increased intracellular polyamine levels. Binds to ODC/SPE1 monomers, inhibiting the assembly of the functional ODC homodimer, and targets the monomers for ubiquitin-independent proteolytic destruction by the 26S proteasome. The polypeptide is Ornithine decarboxylase antizyme (OAZ1) (Saccharomyces cerevisiae (strain ATCC 204508 / S288c) (Baker's yeast)).